Here is a 418-residue protein sequence, read N- to C-terminus: Acyltransferase calJ (418 aa).

Catalysis depends on Ser79, which acts as the Acyl-ester intermediate. Positions 176 and 191 each coordinate substrate.

It belongs to the class-A beta-lactamase family.

Its pathway is secondary metabolite biosynthesis. Acyltransferase; part of the gene cluster that mediates the biosynthesis of calbistrin A and related compounds. Calbistrin A is a secondary metabolite with an interesting structure that was recently found to have bioactivity against leukemia cells. It consists of two polyketides linked by an ester bond: a bicyclic decalin containing polyketide and a linear 12 carbon dioic acid structure. The polyketide synthase calA is probably responsible for forming the decalin moiety. Because calA lacks a designated enoylreductase (ER) domain, the required activity is provided by the trans-enoyl reductase calK. Following release from the PKS, calF then probably catalyzes the oxidation and the subsequent Diels Alder cycloisomerization that lead to the formation of the decalin moiety. The decalin polyketide backbone includes two C-methyl groups, at C7 and C11 in backbone, of which the C7 position is probably methylated by the methyltransferase domain of calA. A candidate for adding the methyl group at C11, if not done by CalA, is the cluster methyltransferase calH. Several additional tailoring enzymes within the cluster could be involved in the modification of the decalin polyketide product. Those include the 3 cytochrome P450 monooxygenases CalE, CalG and CalL, of which one might be responsible for the introduction of the extra hydroxyl group attached to the backbone of the decalin moiety, at position C9 in the backbone, that allows for attachment of the linear moiety. One tailoring enzyme activity that is expected to be involved in biosynthesis of calbistrin is an acyltransferase for connecting the two polyketide synthase products, and which could be performed by the cluster acyltransferase calJ. The enzyme responsible for the biosynthesis of the linear moiety, probably a second PKS, has not been identified yet. The chain is Acyltransferase calJ from Penicillium decumbens.